Consider the following 677-residue polypeptide: Secretogranin-1 (677 aa).

Residues 1-20 (MQPAMLLGLLGAAALAAVSS) form the signal peptide. A disulfide bridge connects residues cysteine 36 and cysteine 57. 2 disordered regions span residues 63–505 (KSGK…RQYE) and 531–558 (NSDF…VTLT). Residues 64–90 (SGKEVKGEEKGENQNSKFEVRLLRDPA) are compositionally biased toward basic and acidic residues. Serine 93, serine 99, and serine 100 each carry phosphoserine. A glycan (O-linked (Xyl...) (chondroitin sulfate) serine) is linked at serine 93. Threonine 115 carries an O-linked (GalNAc...) threonine glycan. The span at 118 to 133 (GNEKWTEGGGHSREGV) shows a compositional bias: basic and acidic residues. Phosphoserine is present on residues serine 129, serine 147, serine 190, and serine 220. Basic and acidic residues-rich tracts occupy residues 148-192 (KEAK…DSGE) and 200-249 (KRSE…KPQE). O-linked (Xyl...) (chondroitin sulfate) serine glycosylation occurs at serine 237. Residues 251-280 (TDQDQSQEESQEGEEGEEGEEGEEGEEDSA) are compositionally biased toward acidic residues. 6 positions are modified to phosphoserine: serine 256, serine 260, serine 300, serine 301, serine 318, and serine 342. Positions 306 to 322 (PLSEERRPSPKESKEAD) are enriched in basic and acidic residues. Position 348 is a sulfotyrosine (tyrosine 348). 2 stretches are compositionally biased toward basic and acidic residues: residues 363–409 (RGSE…ERSY) and 421–455 (GREP…DTAK). Residues serine 365, serine 375, and serine 378 each carry the phosphoserine modification. A Sulfotyrosine modification is found at tyrosine 472. A compositionally biased stretch (basic and acidic residues) spans 491–504 (EESREEVRFPDRQY). Serine 493, serine 532, and serine 543 each carry phosphoserine. 2 positions are modified to sulfotyrosine: tyrosine 566 and tyrosine 624. The tract at residues 622–646 (DFYDSEEQMGPHQEANDEKARADQR) is disordered. Serine 626 carries the phosphoserine modification. The span at 635 to 646 (EANDEKARADQR) shows a compositional bias: basic and acidic residues.

This sequence belongs to the chromogranin/secretogranin protein family. As to quaternary structure, interacts with ITPR1 in the secretory granules.

The protein resides in the secreted. Its function is as follows. Secretogranin-1 is a neuroendocrine secretory granule protein, which may be the precursor for other biologically active peptides. The protein is Secretogranin-1 (Chgb) of Mus musculus (Mouse).